The primary structure comprises 121 residues: Small ribosomal subunit protein uS13 (121 aa).

Residues 97-121 (VRGQRTRTNARTRRGARKTVAGKKK) are disordered. Residues 100 to 121 (QRTRTNARTRRGARKTVAGKKK) are compositionally biased toward basic residues.

This sequence belongs to the universal ribosomal protein uS13 family. Part of the 30S ribosomal subunit. Forms a loose heterodimer with protein S19. Forms two bridges to the 50S subunit in the 70S ribosome.

Located at the top of the head of the 30S subunit, it contacts several helices of the 16S rRNA. In the 70S ribosome it contacts the 23S rRNA (bridge B1a) and protein L5 of the 50S subunit (bridge B1b), connecting the 2 subunits; these bridges are implicated in subunit movement. Contacts the tRNAs in the A and P-sites. This Synechococcus sp. (strain CC9605) protein is Small ribosomal subunit protein uS13.